Reading from the N-terminus, the 218-residue chain is Transmembrane gamma-carboxyglutamic acid protein 1 (218 aa).

The propeptide occupies 1–20 (MGRIFLTGEKANSVLKRYPR). The Gla domain occupies 20-66 (RANGLFEEIRQGNIERECKEEVCTFEEAREAFENNEKTKEFWNTYTK). Residues 21-80 (ANGLFEEIRQGNIERECKEEVCTFEEAREAFENNEKTKEFWNTYTKAQQGESNRGSDWFQ) are Extracellular-facing. A disulfide bridge links Cys37 with Cys42. Residues 81–101 (FYLTFPLIFGLFIILLVIFLI) form a helical membrane-spanning segment. Residues 102–218 (WRCFLRNKTR…AMVPVATTIK (117 aa)) lie on the Cytoplasmic side of the membrane. Positions 160-192 (STRLSNCDPPPTYEEATGQMNLRRSETEPHLDP) are disordered. Basic and acidic residues predominate over residues 182 to 192 (RRSETEPHLDP).

Gla residues are produced after subsequent post-translational modifications of glutamate by a vitamin K-dependent gamma-carboxylase.

It is found in the membrane. This chain is Transmembrane gamma-carboxyglutamic acid protein 1 (PRRG1), found in Bos taurus (Bovine).